The following is a 493-amino-acid chain: 3-octaprenyl-4-hydroxybenzoate carboxy-lyase (493 aa).

Asn-172 contacts Mn(2+). Prenylated FMN contacts are provided by residues 175 to 177, 189 to 191, and 194 to 195; these read IYR, RWL, and RG. Glu-238 serves as a coordination point for Mn(2+). Asp-287 functions as the Proton donor in the catalytic mechanism.

Belongs to the UbiD family. Homohexamer. The cofactor is prenylated FMN. Requires Mn(2+) as cofactor.

Its subcellular location is the cell membrane. The catalysed reaction is a 4-hydroxy-3-(all-trans-polyprenyl)benzoate + H(+) = a 2-(all-trans-polyprenyl)phenol + CO2. The protein operates within cofactor biosynthesis; ubiquinone biosynthesis. Catalyzes the decarboxylation of 3-octaprenyl-4-hydroxy benzoate to 2-octaprenylphenol, an intermediate step in ubiquinone biosynthesis. This Shewanella loihica (strain ATCC BAA-1088 / PV-4) protein is 3-octaprenyl-4-hydroxybenzoate carboxy-lyase.